The following is a 203-amino-acid chain: Dephospho-CoA kinase (203 aa).

The DPCK domain occupies 6 to 203; it reads ILGLTGGIGS…FYLTLRGGRA (198 aa). Position 14 to 19 (14 to 19) interacts with ATP; it reads GSGKSA.

The protein belongs to the CoaE family.

It is found in the cytoplasm. It catalyses the reaction 3'-dephospho-CoA + ATP = ADP + CoA + H(+). It functions in the pathway cofactor biosynthesis; coenzyme A biosynthesis; CoA from (R)-pantothenate: step 5/5. Catalyzes the phosphorylation of the 3'-hydroxyl group of dephosphocoenzyme A to form coenzyme A. This chain is Dephospho-CoA kinase, found in Pseudomonas aeruginosa (strain ATCC 15692 / DSM 22644 / CIP 104116 / JCM 14847 / LMG 12228 / 1C / PRS 101 / PAO1).